A 726-amino-acid polypeptide reads, in one-letter code: ATP-dependent permease MDL1, mitochondrial (726 aa).

Residues 1–112 (MDPIRFGLSR…LAFLKLCVRH (112 aa)) constitute a mitochondrion transit peptide. N-linked (GlcNAc...) asparagine glycosylation is found at Asn66, Asn113, and Asn132. Transmembrane regions (helical) follow at residues 158–178 (FFIA…IPYI), 196–216 (IMGI…FLGS), 306–326 (GYMS…GEYV), 386–406 (GIFF…ILAL), and 423–443 (SFLL…GCFT). One can recognise an ABC transmembrane type-1 domain in the interval 158-447 (FFIAGSLLLV…LSGCFTDIMK (290 aa)). Residues 482 to 719 (LSFRNVGFAY…GTNFYKLMRW (238 aa)) enclose the ABC transporter domain. A glycan (N-linked (GlcNAc...) asparagine) is linked at Asn502. 517–524 (APSGGGKS) serves as a coordination point for ATP. N-linked (GlcNAc...) asparagine glycosylation is found at Asn584, Asn598, and Asn668.

This sequence belongs to the ABC transporter superfamily. ABCB family. Mitochondrial peptide exporter (TC 3.A.1.212) subfamily.

Its subcellular location is the mitochondrion inner membrane. In terms of biological role, mediates export of peptides generated upon proteolysis of mitochondrial inner membrane proteins. The polypeptide is ATP-dependent permease MDL1, mitochondrial (mdl1) (Schizosaccharomyces pombe (strain 972 / ATCC 24843) (Fission yeast)).